A 158-amino-acid chain; its full sequence is uncharacterized protein (158 aa).

A run of 4 helical transmembrane segments spans residues 42–62, 71–91, 102–122, and 130–150; these read FHFAVIVITMLAYLSAFGFLY, WIFIGFLGSMVINAIFPHLIA, LLTGLLLNIPVNSLVIYQMFL, and ELIISTLVVGIILLALIPLLF.

The protein localises to the cell membrane. This is an uncharacterized protein from Bacillus subtilis (strain 168).